A 93-amino-acid polypeptide reads, in one-letter code: YcgL domain-containing protein VV1_0131 (93 aa).

Residues 1-84 (MLCSIYKSSK…PPENLLQQHK (84 aa)) enclose the YcgL domain. The segment at 72-93 (LPPPPENLLQQHKERKAQQKND) is disordered.

The chain is YcgL domain-containing protein VV1_0131 from Vibrio vulnificus (strain CMCP6).